The primary structure comprises 65 residues: UPF0337 protein gbs1203 (65 aa).

Residues 1-12 show a composition bias toward basic and acidic residues; sequence MSEEKFDAKVDK. Positions 1 to 29 are disordered; that stretch reads MSEEKFDAKVDKVSGSVKESVGKLTGDKE.

The protein belongs to the UPF0337 (CsbD) family.

The polypeptide is UPF0337 protein gbs1203 (Streptococcus agalactiae serotype III (strain NEM316)).